A 195-amino-acid chain; its full sequence is UPF0215 protein TK2033 (195 aa).

It belongs to the UPF0215 family.

The sequence is that of UPF0215 protein TK2033 from Thermococcus kodakarensis (strain ATCC BAA-918 / JCM 12380 / KOD1) (Pyrococcus kodakaraensis (strain KOD1)).